Consider the following 264-residue polypeptide: Vitellin-degrading protease (264 aa).

An N-terminal signal peptide occupies residues 1 to 15 (MTNSLLICFTILGLA). Residues 16–27 (ASSPTKPIGDIR) constitute a propeptide, activation peptide. The Peptidase S1 domain occupies 28-253 (IVGGEDIVIT…LREWVDENIT (226 aa)). Cys53 and Cys69 are disulfide-bonded. Catalysis depends on charge relay system residues His68 and Asp113. A disulfide bridge links Cys178 with Cys194. Asp203 is a binding site for substrate. A disulfide bridge links Cys205 with Cys229. Residue Ser209 is the Charge relay system of the active site. N-linked (GlcNAc...) asparagine glycosylation is present at Asn251.

The protein belongs to the peptidase S1 family. Cleavage after Arg-27 leads to beta-VTN protease and subsequent cleavage after Arg-89 leads to alpha-VTN.

In terms of biological role, responsible for the degradation of vitellin in eggs at the head pigmentation stage. This is Vitellin-degrading protease from Bombyx mori (Silk moth).